The following is a 455-amino-acid chain: Chitin deacetylase 2 (455 aa).

Residues 1 to 19 (MIPSTAAALLTLTAGAAFA) form the signal peptide. N-linked (GlcNAc...) asparagine glycans are attached at residues Asn86, Asn98, Asn122, and Asn142. The 191-residue stretch at 157–347 (MTWGLGFDDG…IKSAFNYIVP (191 aa)) folds into the NodB homology domain. The active-site Proton acceptor is Asp164. Asp164 contacts acetate. A Co(2+)-binding site is contributed by Asp165. A glycan (N-linked (GlcNAc...) asparagine) is linked at Asn168. His214 and His218 together coordinate Co(2+). Residue Tyr255 participates in acetate binding. Asn270 and Asn308 each carry an N-linked (GlcNAc...) asparagine glycan. The active-site Proton donor is the His321. 4 N-linked (GlcNAc...) asparagine glycosylation sites follow: Asn325, Asn353, Asn362, and Asn377. Residues 381–423 (STTQKDGSSSTNTASGSGAAGSASATSSSDDSSSSGGSSGSSG) are disordered. Asn426 is a glycosylation site (N-linked (GlcNAc...) asparagine). Residue Ser429 is the site of GPI-anchor amidated serine attachment. Residues 430–455 (GALGMFDSLSGVGLILGGVVAGVMLL) constitute a propeptide, removed in mature form.

The protein belongs to the polysaccharide deacetylase family. Co(2+) is required as a cofactor. The GPI anchor is required for the attachment to the cell membrane but not for cell surface targeting.

It is found in the secreted. Its subcellular location is the cell wall. The protein localises to the cell membrane. It catalyses the reaction [(1-&gt;4)-N-acetyl-beta-D-glucosaminyl](n) + n H2O = chitosan + n acetate. Functionally, hydrolyzes the N-acetamido groups of N-acetyl-D-glucosamine residues in chitin to form chitosan and acetate. Chitosan is required to anchor melanin to the cell wall, for maintenance of cell wall integrity, and for proper cytokinesis. Chitosan offers an advantage during infection as it is less readily detected than chitin by host immunosurveillance mechanisms. The chain is Chitin deacetylase 2 from Cryptococcus neoformans var. grubii serotype A (strain H99 / ATCC 208821 / CBS 10515 / FGSC 9487) (Filobasidiella neoformans var. grubii).